The following is a 206-amino-acid chain: Imidazoleglycerol-phosphate dehydratase (206 aa).

A disordered region spans residues 1 to 21 (MTTPSTAPTPAPRKAEVSRNT).

This sequence belongs to the imidazoleglycerol-phosphate dehydratase family.

It localises to the cytoplasm. It catalyses the reaction D-erythro-1-(imidazol-4-yl)glycerol 3-phosphate = 3-(imidazol-4-yl)-2-oxopropyl phosphate + H2O. It participates in amino-acid biosynthesis; L-histidine biosynthesis; L-histidine from 5-phospho-alpha-D-ribose 1-diphosphate: step 6/9. The protein is Imidazoleglycerol-phosphate dehydratase of Polaromonas sp. (strain JS666 / ATCC BAA-500).